The following is a 394-amino-acid chain: 1-deoxy-D-xylulose 5-phosphate reductoisomerase (394 aa).

Residues Thr13, Gly14, Ser15, Ile16, and Asn127 each coordinate NADPH. Lys128 lines the 1-deoxy-D-xylulose 5-phosphate pocket. NADPH is bound at residue Glu129. Asp153 contacts Mn(2+). The 1-deoxy-D-xylulose 5-phosphate site is built by Ser154, Glu155, Ser184, and His207. Residue Glu155 coordinates Mn(2+). An NADPH-binding site is contributed by Gly213. The 1-deoxy-D-xylulose 5-phosphate site is built by Ser220, Asn225, Lys226, and Glu229. Glu229 is a binding site for Mn(2+).

This sequence belongs to the DXR family. The cofactor is Mg(2+). It depends on Mn(2+) as a cofactor.

The catalysed reaction is 2-C-methyl-D-erythritol 4-phosphate + NADP(+) = 1-deoxy-D-xylulose 5-phosphate + NADPH + H(+). It participates in isoprenoid biosynthesis; isopentenyl diphosphate biosynthesis via DXP pathway; isopentenyl diphosphate from 1-deoxy-D-xylulose 5-phosphate: step 1/6. In terms of biological role, catalyzes the NADPH-dependent rearrangement and reduction of 1-deoxy-D-xylulose-5-phosphate (DXP) to 2-C-methyl-D-erythritol 4-phosphate (MEP). The protein is 1-deoxy-D-xylulose 5-phosphate reductoisomerase of Ectopseudomonas mendocina (strain ymp) (Pseudomonas mendocina).